Consider the following 512-residue polypeptide: Putative ribose/galactose/methyl galactoside import ATP-binding protein 2 (512 aa).

ABC transporter domains lie at 14 to 251 (IALT…VGRQ) and 262 to 507 (TSGN…TQRE). 46–53 (GENGAGKS) is a binding site for ATP.

It belongs to the ABC transporter superfamily. Carbohydrate importer 2 (CUT2) (TC 3.A.1.2) family.

The protein resides in the cell inner membrane. The enzyme catalyses D-ribose(out) + ATP + H2O = D-ribose(in) + ADP + phosphate + H(+). It catalyses the reaction D-galactose(out) + ATP + H2O = D-galactose(in) + ADP + phosphate + H(+). Part of an ABC transporter complex involved in carbohydrate import. Could be involved in ribose, galactose and/or methyl galactoside import. Responsible for energy coupling to the transport system. This is Putative ribose/galactose/methyl galactoside import ATP-binding protein 2 from Burkholderia cenocepacia (strain HI2424).